Reading from the N-terminus, the 78-residue chain is Large ribosomal subunit protein bL28 (78 aa).

A disordered region spans residues 1–22; it reads MAKVCQVTGKRPVTGHNVSHAK.

It belongs to the bacterial ribosomal protein bL28 family.

This is Large ribosomal subunit protein bL28 from Teredinibacter turnerae (strain ATCC 39867 / T7901).